A 343-amino-acid chain; its full sequence is Small ribosomal subunit biogenesis GTPase RsgA (343 aa).

A CP-type G domain is found at 116–275 (RGQLKPVAAN…LIDSPGIREF (160 aa)). GTP-binding positions include 163 to 166 (NKAD) and 217 to 225 (GQSGVGKSS). Cysteine 299, cysteine 304, histidine 306, and cysteine 312 together coordinate Zn(2+).

The protein belongs to the TRAFAC class YlqF/YawG GTPase family. RsgA subfamily. In terms of assembly, monomer. Associates with 30S ribosomal subunit, binds 16S rRNA. Requires Zn(2+) as cofactor.

The protein resides in the cytoplasm. Its function is as follows. One of several proteins that assist in the late maturation steps of the functional core of the 30S ribosomal subunit. Helps release RbfA from mature subunits. May play a role in the assembly of ribosomal proteins into the subunit. Circularly permuted GTPase that catalyzes slow GTP hydrolysis, GTPase activity is stimulated by the 30S ribosomal subunit. This chain is Small ribosomal subunit biogenesis GTPase RsgA, found in Pseudomonas syringae pv. tomato (strain ATCC BAA-871 / DC3000).